The sequence spans 101 residues: NAD(P)H-quinone oxidoreductase subunit 4L (101 aa).

The next 3 membrane-spanning stretches (helical) occupy residues 3-23 (LRYF…GLIT), 30-50 (VLMS…AFSN), and 64-84 (VFVI…VLAI).

Belongs to the complex I subunit 4L family. As to quaternary structure, NDH-1 can be composed of about 15 different subunits; different subcomplexes with different compositions have been identified which probably have different functions.

The protein resides in the cellular thylakoid membrane. It catalyses the reaction a plastoquinone + NADH + (n+1) H(+)(in) = a plastoquinol + NAD(+) + n H(+)(out). The catalysed reaction is a plastoquinone + NADPH + (n+1) H(+)(in) = a plastoquinol + NADP(+) + n H(+)(out). NDH-1 shuttles electrons from an unknown electron donor, via FMN and iron-sulfur (Fe-S) centers, to quinones in the respiratory and/or the photosynthetic chain. The immediate electron acceptor for the enzyme in this species is believed to be plastoquinone. Couples the redox reaction to proton translocation, and thus conserves the redox energy in a proton gradient. Cyanobacterial NDH-1 also plays a role in inorganic carbon-concentration. This chain is NAD(P)H-quinone oxidoreductase subunit 4L, found in Nostoc sp. (strain PCC 7120 / SAG 25.82 / UTEX 2576).